Reading from the N-terminus, the 164-residue chain is NADH-quinone oxidoreductase subunit I (164 aa).

2 consecutive 4Fe-4S ferredoxin-type domains span residues 55–85 (LRRYPNGEERCIACKLCEAICPAQAITIDAE) and 95–124 (TRYDIDMTKCIYCGFCQEACPVDAIVEGPN). Residues Cys-65, Cys-68, Cys-71, Cys-75, Cys-104, Cys-107, Cys-110, and Cys-114 each coordinate [4Fe-4S] cluster.

It belongs to the complex I 23 kDa subunit family. As to quaternary structure, NDH-1 is composed of 14 different subunits. Subunits NuoA, H, J, K, L, M, N constitute the membrane sector of the complex. It depends on [4Fe-4S] cluster as a cofactor.

The protein localises to the cell inner membrane. The catalysed reaction is a quinone + NADH + 5 H(+)(in) = a quinol + NAD(+) + 4 H(+)(out). In terms of biological role, NDH-1 shuttles electrons from NADH, via FMN and iron-sulfur (Fe-S) centers, to quinones in the respiratory chain. The immediate electron acceptor for the enzyme in this species is believed to be ubiquinone. Couples the redox reaction to proton translocation (for every two electrons transferred, four hydrogen ions are translocated across the cytoplasmic membrane), and thus conserves the redox energy in a proton gradient. This chain is NADH-quinone oxidoreductase subunit I, found in Ruegeria pomeroyi (strain ATCC 700808 / DSM 15171 / DSS-3) (Silicibacter pomeroyi).